The following is a 291-amino-acid chain: ATP synthase gamma chain (291 aa).

This sequence belongs to the ATPase gamma chain family. As to quaternary structure, F-type ATPases have 2 components, CF(1) - the catalytic core - and CF(0) - the membrane proton channel. CF(1) has five subunits: alpha(3), beta(3), gamma(1), delta(1), epsilon(1). CF(0) has three main subunits: a, b and c.

Its subcellular location is the cell inner membrane. In terms of biological role, produces ATP from ADP in the presence of a proton gradient across the membrane. The gamma chain is believed to be important in regulating ATPase activity and the flow of protons through the CF(0) complex. In Sphingopyxis alaskensis (strain DSM 13593 / LMG 18877 / RB2256) (Sphingomonas alaskensis), this protein is ATP synthase gamma chain.